The sequence spans 83 residues: uncharacterized protein (83 aa).

A helical membrane pass occupies residues 50–70 (IMVFLGEAWIILIPFAIFCII).

This sequence belongs to the plectrovirus ORF7 family.

The protein localises to the host membrane. This is an uncharacterized protein from Spiroplasma melliferum (SpV1).